We begin with the raw amino-acid sequence, 141 residues long: MADTPSSPAGDGGESGGSVREQDRYLPIANISRIMKKALPPNGKIGKDAKDTVQECVSEFISFITSEASDKCQKEKRKTVNGDDLLWAMATLGFEDYLEPLKIYLARYRELEGDNKGSGKSGDGSNRDAGGGVSGEEMPSW.

The segment at 1–23 (MADTPSSPAGDGGESGGSVREQD) is disordered. Ala2 is subject to N-acetylalanine. The DNA-binding element occupies 26-32 (LPIANIS). The tract at residues 53–64 (VQECVSEFISFI) is subunit association domain (SAD). Residues 114-141 (DNKGSGKSGDGSNRDAGGGVSGEEMPSW) form a disordered region.

This sequence belongs to the NFYB/HAP3 subunit family. As to quaternary structure, heterotrimeric transcription factor composed of three components, NF-YA, NF-YB and NF-YC. NF-YB and NF-YC must interact and dimerize for NF-YA association and DNA binding. Binds directly with DPB3-1. Ubiquitous. Predominantly expressed in leaves, flowers and siliques.

It localises to the nucleus. Functionally, component of the NF-Y/HAP transcription factor complex. The NF-Y complex stimulates the transcription of various genes by recognizing and binding to a CCAAT motif in promoters. In Arabidopsis thaliana (Mouse-ear cress), this protein is Nuclear transcription factor Y subunit B-1.